The sequence spans 284 residues: ATP phosphoribosyltransferase (284 aa).

Belongs to the ATP phosphoribosyltransferase family. Long subfamily. In terms of assembly, equilibrium between an active dimeric form, an inactive hexameric form and higher aggregates. Interconversion between the various forms is largely reversible and is influenced by the natural substrates and inhibitors of the enzyme. Mg(2+) is required as a cofactor.

It is found in the cytoplasm. It carries out the reaction 1-(5-phospho-beta-D-ribosyl)-ATP + diphosphate = 5-phospho-alpha-D-ribose 1-diphosphate + ATP. The protein operates within amino-acid biosynthesis; L-histidine biosynthesis; L-histidine from 5-phospho-alpha-D-ribose 1-diphosphate: step 1/9. Feedback inhibited by histidine. Catalyzes the condensation of ATP and 5-phosphoribose 1-diphosphate to form N'-(5'-phosphoribosyl)-ATP (PR-ATP). Has a crucial role in the pathway because the rate of histidine biosynthesis seems to be controlled primarily by regulation of HisG enzymatic activity. In Mycobacterium avium (strain 104), this protein is ATP phosphoribosyltransferase.